Here is a 314-residue protein sequence, read N- to C-terminus: Ribosomal RNA small subunit methyltransferase H (314 aa).

S-adenosyl-L-methionine is bound by residues G35 to H37, D55, F79, D101, and Q108.

Belongs to the methyltransferase superfamily. RsmH family.

The protein localises to the cytoplasm. The catalysed reaction is cytidine(1402) in 16S rRNA + S-adenosyl-L-methionine = N(4)-methylcytidine(1402) in 16S rRNA + S-adenosyl-L-homocysteine + H(+). Functionally, specifically methylates the N4 position of cytidine in position 1402 (C1402) of 16S rRNA. This Pectobacterium carotovorum subsp. carotovorum (strain PC1) protein is Ribosomal RNA small subunit methyltransferase H.